We begin with the raw amino-acid sequence, 177 residues long: Peptide methionine sulfoxide reductase MsrA (177 aa).

Cys15 is a catalytic residue.

The protein belongs to the MsrA Met sulfoxide reductase family.

It catalyses the reaction L-methionyl-[protein] + [thioredoxin]-disulfide + H2O = L-methionyl-(S)-S-oxide-[protein] + [thioredoxin]-dithiol. The enzyme catalyses [thioredoxin]-disulfide + L-methionine + H2O = L-methionine (S)-S-oxide + [thioredoxin]-dithiol. Has an important function as a repair enzyme for proteins that have been inactivated by oxidation. Catalyzes the reversible oxidation-reduction of methionine sulfoxide in proteins to methionine. This is Peptide methionine sulfoxide reductase MsrA from Listeria innocua serovar 6a (strain ATCC BAA-680 / CLIP 11262).